We begin with the raw amino-acid sequence, 397 residues long: DnaJ protein homolog 1 (397 aa).

One can recognise a J domain in the interval 1 to 52; sequence KNASPDDLKKAYRKAAIKNHPDKGGDPEKFKELAQAYDVLSDPEKREIYDQY. The CR-type zinc finger occupies 114-198; sequence GTSKKLSLSR…CKGEKVVQEK (85 aa). CXXCXGXG motif repeat units follow at residues 127 to 134, 143 to 150, 170 to 177, and 186 to 193; these read CSKCNGKG, CASCQGSG, CNDCKGTG, and CPLCKGEK. The disordered stretch occupies residues 367 to 397; sequence MRRKQHQHAQEAYDEDDEGHGGGQRVQCAQQ. Position 394 is a cysteine methyl ester (cysteine 394). A lipid anchor (S-farnesyl cysteine) is attached at cysteine 394. Residues 395 to 397 constitute a propeptide, removed in mature form; it reads AQQ.

It is found in the membrane. Its function is as follows. Plays a continuous role in plant development probably in the structural organization of compartments. This chain is DnaJ protein homolog 1 (DNAJ1), found in Allium porrum (Leek).